The sequence spans 248 residues: 14-3-3 protein sigma (248 aa).

Ser-5, Ser-74, and Ser-248 each carry phosphoserine.

The protein belongs to the 14-3-3 family. As to quaternary structure, homodimer. Interacts with KRT17 and SAMSN1. Found in a complex with XPO7, EIF4A1, ARHGAP1, VPS26A, VPS29 and VPS35. Interacts with GAB2. Interacts with SRPK2. Interacts with COPS6. Interacts with COP1; this interaction leads to proteasomal degradation. Interacts with the 'Thr-369' phosphorylated form of DAPK2. Interacts with PI4KB. Interacts with SLITRK1. Interacts with LRRK2; this interaction is dependent on LRRK2 phosphorylation. Interacts with PKP3 (via N-terminus); the interaction maintains the cytoplasmic pool of PKP3, facilitates PKP3 exchange at desmosomes and restricts PKP3 localization to existing desmosome cell junctions. Interacts with LCP2. In terms of processing, ubiquitinated. Ubiquitination by RFFL induces proteasomal degradation and indirectly regulates p53/TP53 activation.

Its subcellular location is the cytoplasm. It is found in the nucleus. The protein localises to the secreted. Adapter protein implicated in the regulation of a large spectrum of both general and specialized signaling pathways. Binds to a large number of partners, usually by recognition of a phosphoserine or phosphothreonine motif. Binding generally results in the modulation of the activity of the binding partner. Promotes cytosolic retention of GBP1 GTPase by binding to phosphorylated GBP1, thereby inhibiting the innate immune response. Also acts as a TP53/p53-regulated inhibitor of G2/M progression. When bound to KRT17, regulates protein synthesis and epithelial cell growth by stimulating Akt/mTOR pathway. Acts to maintain desmosome cell junction adhesion in epithelial cells via interacting with and sequestering PKP3 to the cytoplasm, thereby restricting its translocation to existing desmosome structures and therefore maintaining desmosome protein homeostasis. Also acts to facilitate PKP3 exchange at desmosome plaques, thereby maintaining keratinocyte intercellular adhesion. May also regulate MDM2 autoubiquitination and degradation and thereby activate p53/TP53. This Bos taurus (Bovine) protein is 14-3-3 protein sigma (SFN).